We begin with the raw amino-acid sequence, 878 residues long: Protein translocase subunit SecA (878 aa).

ATP contacts are provided by residues Q81, G99–T103, and D489.

This sequence belongs to the SecA family.

It is found in the plastid. The protein localises to the chloroplast stroma. Its subcellular location is the chloroplast thylakoid membrane. The catalysed reaction is ATP + H2O + cellular proteinSide 1 = ADP + phosphate + cellular proteinSide 2.. Its function is as follows. Has a central role in coupling the hydrolysis of ATP to the transfer of proteins across the thylakoid membrane. This is Protein translocase subunit SecA from Thalassiosira pseudonana (Marine diatom).